Reading from the N-terminus, the 555-residue chain is MIWVAVVITMLLFILVAKPTGIYLEKAFQGSKKLDKVFGPFEKLIFKITGVKEYNQTWKQYALSLVLLNGFMIVVVYFIFRLQGVLPLNPAHIEGMEPTLAFNTAISFMADTNLQHYSGENGLSYLSQLIGITFLMFAAPATTLALVMAFIRGLAGKELGNFFVDFTRALTRVFLPIAFMAALVFVALGVPQTLDGAVTAQTIDGAKQSILRGPVASFVSIKELGNNGGGFFGANSTHPFENPGQMSNILQMMLMMLLPTALPFTYGRMVGNKKQGRILFVSLFMVFLLGFITITTSELNGNPALNGMGIEHVQGSTEGKEVRFGTVFSSLYATVTTAAETGAVNTMHDTLTPIGGLVPLVNMMLNTVYGGVGAGFVNIIMYAIIAVFISGLMVGRTPEFLGKKIEGKEMKLIAVTILFHPLLILGFSALALSTSLGTDAISHSGFHGLTQVVYEYTSSAANNGSGFEGLADNTPFWNITTGLVMFLGRYFSLITMLAVAASLKEKTVVPETVGTFRTDNSLFGGIFIGTIVIVGALTFFPMLVLGPIAEFLTLK.

The next 10 helical transmembrane spans lie at 2–22, 60–80, 130–150, 173–193, 246–266, 278–298, 374–394, 412–432, 483–503, and 525–545; these read IWVAVVITMLLFILVAKPTGI, QYALSLVLLNGFMIVVVYFIF, IGITFLMFAAPATTLALVMAF, VFLPIAFMAALVFVALGVPQT, MSNILQMMLMMLLPTALPFTY, ILFVSLFMVFLLGFITITTSE, AGFVNIIMYAIIAVFISGLMV, LIAVTILFHPLLILGFSALAL, LVMFLGRYFSLITMLAVAASL, and GIFIGTIVIVGALTFFPMLVL.

The protein belongs to the KdpA family. In terms of assembly, the system is composed of three essential subunits: KdpA, KdpB and KdpC.

It localises to the cell membrane. Functionally, part of the high-affinity ATP-driven potassium transport (or Kdp) system, which catalyzes the hydrolysis of ATP coupled with the electrogenic transport of potassium into the cytoplasm. This subunit binds the extracellular potassium ions and delivers the ions to the membrane domain of KdpB through an intramembrane tunnel. The chain is Potassium-transporting ATPase potassium-binding subunit from Bacillus cereus (strain Q1).